Reading from the N-terminus, the 376-residue chain is Alpha-2,8-sialyltransferase 8E (376 aa).

The chain crosses the membrane as a helical span at residues 17 to 37 (TLLFIFICAFALVTLLQQILY). N-linked (GlcNAc...) asparagine glycosylation occurs at Asn56. 2 disulfides stabilise this stretch: Cys164–Cys313 and Cys178–Cys373. Substrate-binding positions include Asn192 and 214–216 (NPS). The N-linked (GlcNAc...) asparagine glycan is linked to Asn241. 300 to 302 (STG) is a binding site for substrate. His348 functions as the Proton donor/acceptor in the catalytic mechanism.

This sequence belongs to the glycosyltransferase 29 family. As to expression, expressed in liver.

The protein localises to the golgi apparatus membrane. It catalyses the reaction a ganglioside GT1b (d18:1(4E)) + CMP-N-acetyl-beta-neuraminate = a ganglioside GQ1b (d18:1(4E)) + CMP + H(+). The enzyme catalyses a ganglioside GQ1c (d18:1(4E)) + CMP-N-acetyl-beta-neuraminate = a ganglioside GP1c (d18:1(4E)) + CMP + H(+). The catalysed reaction is a ganglioside GD3 (d18:1(4E)) + CMP-N-acetyl-beta-neuraminate = a ganglioside GT3 (d18:1(4E)) + CMP + H(+). It carries out the reaction a ganglioside GD1a (d18:1(4E)) + CMP-N-acetyl-beta-neuraminate = a ganglioside GT1a (d18:1(4E)) + CMP + H(+). It catalyses the reaction a ganglioside GM1b (d18:1(4E)) + CMP-N-acetyl-beta-neuraminate = a ganglioside GD1c (d18:1(4E)) + CMP + H(+). It participates in protein modification; protein glycosylation. Functionally, involved in the synthesis of gangliosides GD1c, GT1a, GQ1b, GP1c and GT3 from GD1a, GT1b, GM1b and GD3 respectively. The chain is Alpha-2,8-sialyltransferase 8E from Rattus norvegicus (Rat).